The primary structure comprises 498 residues: Probable dipeptidase B (498 aa).

The active site involves C26.

It belongs to the peptidase C69 family.

It carries out the reaction an L-aminoacyl-L-amino acid + H2O = 2 an L-alpha-amino acid. The sequence is that of Probable dipeptidase B (pepDB) from Streptococcus pyogenes serotype M1.